A 77-amino-acid polypeptide reads, in one-letter code: UPF0401 protein c3666 (77 aa).

The protein belongs to the UPF0401 family.

This is UPF0401 protein c3666 from Escherichia coli O6:H1 (strain CFT073 / ATCC 700928 / UPEC).